A 729-amino-acid chain; its full sequence is Bromo and FHA domain-containing protein DDB_G0267958 (729 aa).

Residues 46-79 (LPIPNTSNTNPPMNQSSSPTTTTTTPTTTTTPTT) show a composition bias toward low complexity. The tract at residues 46 to 83 (LPIPNTSNTNPPMNQSSSPTTTTTTPTTTTTPTTAEPA) is disordered. One can recognise an FHA domain in the interval 112–167 (LIIGSDTELADIQVVRPGIYPKHVEIIYDKEKKKFYLNPLIDPKDSDNVRLNFVPF). Low complexity-rich tracts occupy residues 208–221 (IPSN…NTPI), 229–275 (PPSS…ATKT), and 283–306 (PTKT…AVKK). Disordered regions lie at residues 208 to 361 (IPSN…MSCK) and 403 to 442 (SRRP…PKVP). Acidic residues predominate over residues 310–341 (DDDYGDDYNEEEDDDDEEEEEEEEEEEEEEEV). Residues 315–352 (DDYNEEEDDDDEEEEEEEEEEEEEEEVESKQIKVVNSK) adopt a coiled-coil conformation. Over residues 406 to 431 (PTAPVTPTKPTSTKKVTTPKKATVVK) the composition is skewed to low complexity. Positions 498–617 (SNEKKEILKC…IELYKALSNS (120 aa)) constitute a Bromo domain. Residues 659–718 (SKNKEQTVPQEEDEEEEEEEEEEEEEEEEGEEGKEDEEEEEKEEEEGEENEEEEDVEIDD) are a coiled coil. A disordered region spans residues 659 to 729 (SKNKEQTVPQ…EIDQESDDDQ (71 aa)). Over residues 668 to 729 (QEEDEEEEEE…EIDQESDDDQ (62 aa)) the composition is skewed to acidic residues.

This chain is Bromo and FHA domain-containing protein DDB_G0267958, found in Dictyostelium discoideum (Social amoeba).